We begin with the raw amino-acid sequence, 208 residues long: Protein-L-isoaspartate O-methyltransferase (208 aa).

S59 is a catalytic residue.

This sequence belongs to the methyltransferase superfamily. L-isoaspartyl/D-aspartyl protein methyltransferase family.

It localises to the cytoplasm. The catalysed reaction is [protein]-L-isoaspartate + S-adenosyl-L-methionine = [protein]-L-isoaspartate alpha-methyl ester + S-adenosyl-L-homocysteine. Catalyzes the methyl esterification of L-isoaspartyl residues in peptides and proteins that result from spontaneous decomposition of normal L-aspartyl and L-asparaginyl residues. It plays a role in the repair and/or degradation of damaged proteins. The chain is Protein-L-isoaspartate O-methyltransferase from Escherichia coli O1:K1 / APEC.